The following is a 187-amino-acid chain: CRISPR system Cmr subunit Cmr1-2 (187 aa).

The protein belongs to the CRISPR system Cmr1 family. Part of the type III-B Cmr ribonucleoprotein (RNP) complex. This is an elongated RNP with Cmr2 and Cmr3 as the base, with Cmr4 and Cmr5 forming a helical core along the mature crRNA (39 or 45 nt in length), while the complex is capped by Cmr6 and Cmr1. The 5' end of the crRNA is bound to Cmr2 and Cmr3, while Cmr6 and a Cmr1 subunit (Cmr1-1 or Cmr1-2) cap the 3' end of the crRNA. The target RNA lies antiparallel to the crRNA, with its 5' end near Cmr1 and Cmr6 and its 3' end near Cmr2 and Cmr3; major target cleavage occurs nears the junction of Cmr1/Cmr6 and Cmr4/Cmr, with minor cleavage occurring at 6 nt intervals which coincide with the proposed spacing of Cmr4 subunits.

The protein localises to the cytoplasm. Its function is as follows. CRISPR (clustered regularly interspaced short palindromic repeat), is an adaptive immune system that provides protection against mobile genetic elements (viruses, transposable elements and conjugative plasmids). CRISPR clusters contain sequences complementary to antecedent mobile elements and target invading nucleic acids. CRISPR clusters are transcribed and processed into CRISPR RNA (crRNA), formerly called psiRNA (prokaryotic silencing) in this organism. Part of the Cmr ribonucleoprotein complex which has divalent cation-dependent endoribonuclease activity specific for ssRNA complementary to the crRNA (target RNA), generating 5' hydroxy- and 3' phosphate or 2'-3' cyclic phosphate termini. Cmr4 is probably the subunit that cleaves target RNA. Cmr complex does not cleave ssDNA complementary to the crRNA. Cleavage of invading RNA is guided by the crRNA; substrate cleavage occurs a fixed distance (14 nt) from the 3' end of the crRNA. In vitro reconstitution shows Cmr1-2 and Cmr5 are not absolutely necessary for target cleavage. In Pyrococcus furiosus (strain ATCC 43587 / DSM 3638 / JCM 8422 / Vc1), this protein is CRISPR system Cmr subunit Cmr1-2.